The primary structure comprises 933 residues: Valine--tRNA ligase (933 aa).

The 'HIGH' region signature appears at 58-68 (PNVTGSLHMGH). The short motif at 556–560 (KMSKS) is the 'KMSKS' region element. K559 lines the ATP pocket. Coiled coils occupy residues 807–833 (VTKNQNLLNLLKKATQDIQALTRANKV) and 864–933 (EGLV…LGLK).

Belongs to the class-I aminoacyl-tRNA synthetase family. ValS type 1 subfamily. In terms of assembly, monomer.

The protein localises to the cytoplasm. The enzyme catalyses tRNA(Val) + L-valine + ATP = L-valyl-tRNA(Val) + AMP + diphosphate. In terms of biological role, catalyzes the attachment of valine to tRNA(Val). As ValRS can inadvertently accommodate and process structurally similar amino acids such as threonine, to avoid such errors, it has a 'posttransfer' editing activity that hydrolyzes mischarged Thr-tRNA(Val) in a tRNA-dependent manner. This Prochlorococcus marinus (strain SARG / CCMP1375 / SS120) protein is Valine--tRNA ligase.